The chain runs to 298 residues: Putative insertion sequence ATP-binding protein y4iQ/y4nD/y4sD (298 aa).

Residue 114 to 121 (GPPGGGKS) coordinates ATP. The segment at 276–298 (RQSEHDETLASDNQHDTFMPTAT) is disordered.

It belongs to the IS21/IS1162 putative ATP-binding protein family.

The protein is Putative insertion sequence ATP-binding protein y4iQ/y4nD/y4sD of Sinorhizobium fredii (strain NBRC 101917 / NGR234).